Here is a 400-residue protein sequence, read N- to C-terminus: Nicotinate phosphoribosyltransferase (400 aa).

Position 220 is a phosphohistidine; by autocatalysis (His-220).

It belongs to the NAPRTase family. In terms of processing, transiently phosphorylated on a His residue during the reaction cycle. Phosphorylation strongly increases the affinity for substrates and increases the rate of nicotinate D-ribonucleotide production. Dephosphorylation regenerates the low-affinity form of the enzyme, leading to product release.

It carries out the reaction nicotinate + 5-phospho-alpha-D-ribose 1-diphosphate + ATP + H2O = nicotinate beta-D-ribonucleotide + ADP + phosphate + diphosphate. The protein operates within cofactor biosynthesis; NAD(+) biosynthesis; nicotinate D-ribonucleotide from nicotinate: step 1/1. Its function is as follows. Catalyzes the synthesis of beta-nicotinate D-ribonucleotide from nicotinate and 5-phospho-D-ribose 1-phosphate at the expense of ATP. The polypeptide is Nicotinate phosphoribosyltransferase (Shigella sonnei (strain Ss046)).